We begin with the raw amino-acid sequence, 185 residues long: Large ribosomal subunit protein uL5 (185 aa).

Belongs to the universal ribosomal protein uL5 family. Part of the 50S ribosomal subunit; part of the 5S rRNA/L5/L18/L25 subcomplex. Contacts the 5S rRNA and the P site tRNA. Forms a bridge to the 30S subunit in the 70S ribosome.

Its function is as follows. This is one of the proteins that bind and probably mediate the attachment of the 5S RNA into the large ribosomal subunit, where it forms part of the central protuberance. In the 70S ribosome it contacts protein S13 of the 30S subunit (bridge B1b), connecting the 2 subunits; this bridge is implicated in subunit movement. Contacts the P site tRNA; the 5S rRNA and some of its associated proteins might help stabilize positioning of ribosome-bound tRNAs. This Rhizobium etli (strain CIAT 652) protein is Large ribosomal subunit protein uL5.